A 189-amino-acid chain; its full sequence is Stathmin-4 (189 aa).

2 S-palmitoyl cysteine lipidation sites follow: C20 and C22. Residues 48-189 (SDMEVIELNK…NKELKEEASR (142 aa)) form the SLD domain. S90 is subject to Phosphoserine. Residues 90 to 188 (SLEEIQKKLE…KNKELKEEAS (99 aa)) adopt a coiled-coil conformation. The tract at residues 168–189 (QEKDKHAEEVRKNKELKEEASR) is disordered.

The protein belongs to the stathmin family.

The protein localises to the golgi apparatus. The protein resides in the cell projection. Its subcellular location is the growth cone. It is found in the axon. Exhibits microtubule-destabilizing activity. In Homo sapiens (Human), this protein is Stathmin-4 (STMN4).